The following is a 402-amino-acid chain: Cytochrome b561 and DOMON domain-containing protein At4g17280 (402 aa).

An N-terminal signal peptide occupies residues 1–31 (MSNHMSIMKFLNQILCLSLILSISMTTLSFA). A DOMON domain is found at 54 to 171 (LDSFLHYTYE…GTINTVWQDG (118 aa)). Residues 183 to 379 (TSGNNVRSVS…LEAFTWYVVI (197 aa)) enclose the Cytochrome b561 domain. 2 helical membrane-spanning segments follow: residues 218–238 (IHGI…AIIA) and 250–270 (AWFY…VAGW). The heme b site is built by H219, H255, and H288. The helical transmembrane segment at 290–310 (AIGIALFSLATVQVFAMFLRP) threads the bilayer. H324 is a heme b binding site. 2 consecutive transmembrane segments (helical) span residues 326–346 (TIGY…LGIL) and 359–379 (IIVV…YVVI).

Heme b is required as a cofactor.

Its subcellular location is the membrane. In terms of biological role, may act as a catecholamine-responsive trans-membrane electron transporter. The polypeptide is Cytochrome b561 and DOMON domain-containing protein At4g17280 (Arabidopsis thaliana (Mouse-ear cress)).